A 194-amino-acid polypeptide reads, in one-letter code: Protein GrpE (194 aa).

A compositionally biased stretch (polar residues) spans 1-13 (MENTQENPTSQNP). Residues 1 to 50 (MENTQENPTSQNPKPAEETARQAAEAAAPQQEAAANAATDSPASAEQAAL) are disordered. Residues 21–50 (RQAAEAAAPQQEAAANAATDSPASAEQAAL) show a composition bias toward low complexity.

This sequence belongs to the GrpE family. As to quaternary structure, homodimer.

Its subcellular location is the cytoplasm. Its function is as follows. Participates actively in the response to hyperosmotic and heat shock by preventing the aggregation of stress-denatured proteins, in association with DnaK and GrpE. It is the nucleotide exchange factor for DnaK and may function as a thermosensor. Unfolded proteins bind initially to DnaJ; upon interaction with the DnaJ-bound protein, DnaK hydrolyzes its bound ATP, resulting in the formation of a stable complex. GrpE releases ADP from DnaK; ATP binding to DnaK triggers the release of the substrate protein, thus completing the reaction cycle. Several rounds of ATP-dependent interactions between DnaJ, DnaK and GrpE are required for fully efficient folding. This Paraburkholderia xenovorans (strain LB400) protein is Protein GrpE.